Consider the following 528-residue polypeptide: GTPase Obg (528 aa).

An Obg domain is found at 2–159; that stretch reads ASFVDRVVLH…SDIVLELKSI (158 aa). Residues 160–343 enclose the OBG-type G domain; sequence ADIALVGFPS…LGFAMAEIVQ (184 aa). GTP contacts are provided by residues 166 to 173, 191 to 195, 212 to 215, 295 to 298, and 324 to 326; these read GFPSAGKS, FTTLI, DVPG, NKVD, and SAT. Residues S173 and T193 each coordinate Mg(2+). The region spanning 363 to 447 is the OCT domain; sequence PRAVNESGFK…DDGVVFDWEP (85 aa). Positions 471 to 490 are disordered; sequence DRPTRSQKRDEQIERREAKA.

Belongs to the TRAFAC class OBG-HflX-like GTPase superfamily. OBG GTPase family. In terms of assembly, monomer. Mg(2+) serves as cofactor.

The protein localises to the cytoplasm. Its function is as follows. An essential GTPase which binds GTP, GDP and possibly (p)ppGpp with moderate affinity, with high nucleotide exchange rates and a fairly low GTP hydrolysis rate. Plays a role in control of the cell cycle, stress response, ribosome biogenesis and in those bacteria that undergo differentiation, in morphogenesis control. The polypeptide is GTPase Obg (Paenarthrobacter aurescens (strain TC1)).